Here is a 37-residue protein sequence, read N- to C-terminus: Cytochrome b6-f complex subunit 5 (37 aa).

The helical transmembrane segment at 5–25 threads the bilayer; the sequence is LLSGIVLGLIPITLAGLFVTA.

The protein belongs to the PetG family. The 4 large subunits of the cytochrome b6-f complex are cytochrome b6, subunit IV (17 kDa polypeptide, PetD), cytochrome f and the Rieske protein, while the 4 small subunits are PetG, PetL, PetM and PetN. The complex functions as a dimer.

The protein localises to the plastid. It is found in the chloroplast thylakoid membrane. Component of the cytochrome b6-f complex, which mediates electron transfer between photosystem II (PSII) and photosystem I (PSI), cyclic electron flow around PSI, and state transitions. PetG is required for either the stability or assembly of the cytochrome b6-f complex. This chain is Cytochrome b6-f complex subunit 5, found in Cryptomeria japonica (Japanese cedar).